A 314-amino-acid polypeptide reads, in one-letter code: DNA-directed RNA polymerase subunit alpha (314 aa).

Residues 1–228 form an alpha N-terminal domain (alpha-NTD) region; it reads MIEIEKPRIE…EHLNIFVGLT (228 aa). The segment at 246–314 is alpha C-terminal domain (alpha-CTD); the sequence is EKVLEMSIEE…DLGLGLRKED (69 aa).

The protein belongs to the RNA polymerase alpha chain family. Homodimer. The RNAP catalytic core consists of 2 alpha, 1 beta, 1 beta' and 1 omega subunit. When a sigma factor is associated with the core the holoenzyme is formed, which can initiate transcription.

It catalyses the reaction RNA(n) + a ribonucleoside 5'-triphosphate = RNA(n+1) + diphosphate. Functionally, DNA-dependent RNA polymerase catalyzes the transcription of DNA into RNA using the four ribonucleoside triphosphates as substrates. This chain is DNA-directed RNA polymerase subunit alpha, found in Staphylococcus aureus (strain Mu3 / ATCC 700698).